We begin with the raw amino-acid sequence, 251 residues long: Small ribosomal subunit protein uS2 (251 aa).

The protein belongs to the universal ribosomal protein uS2 family.

The sequence is that of Small ribosomal subunit protein uS2 from Synechococcus sp. (strain ATCC 27144 / PCC 6301 / SAUG 1402/1) (Anacystis nidulans).